A 615-amino-acid polypeptide reads, in one-letter code: Deoxyribodipyrimidine photo-lyase (615 aa).

A disordered region spans residues 1-53 (MAPSKRKASAPPQTSHVNGNPSADKKRKTTTDAPPTNPNTSSDPLRAPHPFYK). A compositionally biased stretch (polar residues) spans 11-21 (PPQTSHVNGNP). The span at 31–40 (TDAPPTNPNT) shows a compositional bias: low complexity. A Photolyase/cryptochrome alpha/beta domain is found at 108 to 249 (QAVVHWFKMD…AADVVHDTCV (142 aa)). An FAD-binding site is contributed by Tyr-352. Arg-356 serves as a coordination point for DNA. An FAD-binding site is contributed by 364-368 (TSNLS). Interaction with DNA regions lie at residues 407-414 (EVAWRDFY) and 474-475 (NR). 505–507 (DGD) contacts FAD. Residue Gln-537 participates in DNA binding.

The protein belongs to the DNA photolyase class-1 family. As to quaternary structure, monomer. The cofactor is FAD. It depends on (6R)-5,10-methylene-5,6,7,8-tetrahydrofolate as a cofactor.

The enzyme catalyses cyclobutadipyrimidine (in DNA) = 2 pyrimidine residues (in DNA).. Functionally, involved in repair of UV radiation-induced DNA damage. Catalyzes the light-dependent monomerization (300-600 nm) of cyclobutyl pyrimidine dimers (in cis-syn configuration), which are formed between adjacent bases on the same DNA strand upon exposure to ultraviolet radiation. This is Deoxyribodipyrimidine photo-lyase (phr) from Neurospora crassa (strain ATCC 24698 / 74-OR23-1A / CBS 708.71 / DSM 1257 / FGSC 987).